The following is a 116-amino-acid chain: Selenoprotein H (116 aa).

Residue Lys20 is modified to N6-acetyllysine. A cross-link (cysteinyl-selenocysteine (Cys-Sec); redox-active) is located at residues Cys35 to Sec38. Sec38 is a non-standard amino acid (selenocysteine).

Belongs to the SelWTH family.

In terms of biological role, may be involved in a redox-related process. In Mus musculus (Mouse), this protein is Selenoprotein H.